A 248-amino-acid chain; its full sequence is UDP-2,3-diacylglucosamine hydrolase (248 aa).

Mn(2+) is bound by residues aspartate 7, histidine 9, aspartate 40, asparagine 78, and histidine 113. 78–79 lines the substrate pocket; the sequence is NR. 5 residues coordinate substrate: aspartate 121, serine 159, threonine 163, lysine 166, and histidine 194. Residues histidine 194 and histidine 196 each coordinate Mn(2+).

Belongs to the LpxH family. It depends on Mn(2+) as a cofactor.

It localises to the cell inner membrane. It carries out the reaction UDP-2-N,3-O-bis[(3R)-3-hydroxytetradecanoyl]-alpha-D-glucosamine + H2O = 2-N,3-O-bis[(3R)-3-hydroxytetradecanoyl]-alpha-D-glucosaminyl 1-phosphate + UMP + 2 H(+). The protein operates within glycolipid biosynthesis; lipid IV(A) biosynthesis; lipid IV(A) from (3R)-3-hydroxytetradecanoyl-[acyl-carrier-protein] and UDP-N-acetyl-alpha-D-glucosamine: step 4/6. In terms of biological role, hydrolyzes the pyrophosphate bond of UDP-2,3-diacylglucosamine to yield 2,3-diacylglucosamine 1-phosphate (lipid X) and UMP by catalyzing the attack of water at the alpha-P atom. Involved in the biosynthesis of lipid A, a phosphorylated glycolipid that anchors the lipopolysaccharide to the outer membrane of the cell. The sequence is that of UDP-2,3-diacylglucosamine hydrolase from Pseudomonas fluorescens (strain Pf0-1).